The chain runs to 1195 residues: Error-prone DNA polymerase (1195 aa).

Residues A1163 to H1195 form a disordered region.

It belongs to the DNA polymerase type-C family. DnaE2 subfamily.

Its subcellular location is the cytoplasm. The enzyme catalyses DNA(n) + a 2'-deoxyribonucleoside 5'-triphosphate = DNA(n+1) + diphosphate. In terms of biological role, DNA polymerase involved in damage-induced mutagenesis and translesion synthesis (TLS). It is not the major replicative DNA polymerase. The sequence is that of Error-prone DNA polymerase from Rhodopseudomonas palustris (strain ATCC BAA-98 / CGA009).